Reading from the N-terminus, the 83-residue chain is Cobrotoxin homolog (83 aa).

A signal peptide spans 1 to 21 (METLLLTLLVVTIVCLDLGYT). Disulfide bonds link Cys24–Cys45, Cys38–Cys62, Cys64–Cys75, and Cys76–Cys81.

It belongs to the three-finger toxin family. Short-chain subfamily. Type I alpha-neurotoxin sub-subfamily. Expressed by the venom gland.

It is found in the secreted. In terms of biological role, binds to muscle nicotinic acetylcholine receptor (nAChR) and inhibit acetylcholine from binding to the receptor, thereby impairing neuromuscular transmission. The polypeptide is Cobrotoxin homolog (Naja naja (Indian cobra)).